A 1124-amino-acid chain; its full sequence is Regulator of nonsense transcripts 1 (1124 aa).

Positions 1-410 (MSVEAYGPSS…LRSSVGAPVE (410 aa)) are sufficient for interaction with RENT2. A phosphoserine mark is found at serine 10 and serine 31. Residues 39–69 (TLPSQTQTPPGGPGGAGGPGGAGAGGAAGQL) form a disordered region. A compositionally biased stretch (gly residues) spans 51–66 (PGGAGGPGGAGAGGAA). In terms of domain architecture, Upf1 CH-rich spans 110-267 (TKDLPVHACS…NKLEELWKEN (158 aa)). Residues cysteine 118, cysteine 121, cysteine 132, serine 135, cysteine 140, histidine 150, histidine 154, cysteine 160, cysteine 178, cysteine 181, cysteine 204, and cysteine 208 each coordinate Zn(2+). A C3H region spans residues 118–150 (CSYCGIHDPACVVYCNTSKKWFCNGRGNTSGSH). Residues 132-160 (CNTSKKWFCNGRGNTSGSHIVNHLVRAKC) form a CC/SHH/C region. Positions 178 to 208 (CYNCGCRNVFLLGFIPAKADSVVVLLCRQPC) are C4. Residues glutamine 481 and 501-505 (GTGKT) each bind ATP. Serine 560 carries the phosphoserine modification. ATP is bound by residues glutamine 671, tyrosine 708, and glutamate 839. Phosphoserine is present on serine 951. Disordered stretches follow at residues 1004-1053 (FGQA…VASQ) and 1066-1091 (SMSQ…YLGD). The residue at position 1014 (arginine 1014) is an Omega-N-methylarginine. The span at 1020 to 1029 (KTGRGGRQKN) shows a compositional bias: basic residues. The segment covering 1036-1053 (PSQTTLPNSQASQDVASQ) has biased composition (polar residues). Positions 1066 to 1081 (SMSQPSQMSQPGLSQP) are enriched in low complexity. A phosphoserine mark is found at serine 1084, serine 1102, serine 1105, and serine 1122. 2 consecutive short sequence motifs ([ST]-Q motif) follow at residues 1084–1085 (SQ) and 1102–1103 (SQ). The disordered stretch occupies residues 1105 to 1124 (STYQGERAYQHGGVTGLSQY).

This sequence belongs to the DNA2/NAM7 helicase family. In terms of assembly, found in a post-splicing messenger ribonucleoprotein (mRNP) complex. Associates with the exon junction complex (EJC). Associates with the SGM1C complex; is phosphorylated by the complex kinase component SGM1. Part of a complex composed of SMG1, DHX34 and UPF1; within the complex DHX34 acts as a scaffolding protein to facilitate SMG1 phosphorylation of UPF1. Interacts with UPF2. Interacts with UPF3A and UPF3B. Interacts with EST1A. Interacts with SLBP. Interacts (when hyperphosphorylated) with PNRC2. Interacts with AGO1 and AGO2. Interacts with GSPT2. Interacts with isoform 1 and isoform 5 of ADAR/ADAR1. Interacts with SMG7. Interacts with ZC3H12A; this interaction occurs in a mRNA translationally active- and termination-dependent manner and is essential for ZC3H12A-mediated degradation of target mRNAs. Interacts with CPSF6. Interacts with MOV10; the interaction is direct and RNA-dependent. Interacts with SHFL; the interaction increases in the presence of RNA. Interacts with UPF2 and DDX4; interactions are mediated by TDRD6. Interacts with DHX34 and PABPC1/PABP1; the interactions are RNA-independent. Interacts with RBM46. In terms of processing, phosphorylated by SMG1; required for formation of mRNA surveillance complexes. Localizes in male germ cells.

The protein resides in the cytoplasm. The protein localises to the P-body. It is found in the nucleus. Its subcellular location is the perinuclear region. It catalyses the reaction ATP + H2O = ADP + phosphate + H(+). In terms of biological role, RNA-dependent helicase required for nonsense-mediated decay (NMD) of aberrant mRNAs containing premature stop codons and modulates the expression level of normal mRNAs. Is recruited to mRNAs upon translation termination and undergoes a cycle of phosphorylation and dephosphorylation; its phosphorylation appears to be a key step in NMD. Recruited by release factors to stalled ribosomes together with the SMG1C protein kinase complex to form the transient SURF (SMG1-UPF1-eRF1-eRF3) complex. In EJC-dependent NMD, the SURF complex associates with the exon junction complex (EJC) (located 50-55 or more nucleotides downstream from the termination codon) through UPF2 and allows the formation of an UPF1-UPF2-UPF3 surveillance complex which is believed to activate NMD. Phosphorylated UPF1 is recognized by EST1B/SMG5, SMG6 and SMG7 which are thought to provide a link to the mRNA degradation machinery involving exonucleolytic and endonucleolytic pathways, and to serve as adapters to protein phosphatase 2A (PP2A), thereby triggering UPF1 dephosphorylation and allowing the recycling of NMD factors. UPF1 can also activate NMD without UPF2 or UPF3, and in the absence of the NMD-enhancing downstream EJC indicative for alternative NMD pathways. Plays a role in replication-dependent histone mRNA degradation at the end of phase S; the function is independent of UPF2. For the recognition of premature termination codons (PTC) and initiation of NMD a competitive interaction between UPF1 and PABPC1 with the ribosome-bound release factors is proposed. The ATPase activity of UPF1 is required for disassembly of mRNPs undergoing NMD. Together with UPF2 and dependent on TDRD6, mediates the degradation of mRNA harboring long 3'UTR by inducing the NMD machinery. Also capable of unwinding double-stranded DNA and translocating on single-stranded DNA. The polypeptide is Regulator of nonsense transcripts 1 (Mus musculus (Mouse)).